Consider the following 487-residue polypeptide: Glutamyl-tRNA(Gln) amidotransferase subunit A (487 aa).

Residues lysine 79 and serine 154 each act as charge relay system in the active site. Serine 178 serves as the catalytic Acyl-ester intermediate.

Belongs to the amidase family. GatA subfamily. Heterotrimer of A, B and C subunits.

It catalyses the reaction L-glutamyl-tRNA(Gln) + L-glutamine + ATP + H2O = L-glutaminyl-tRNA(Gln) + L-glutamate + ADP + phosphate + H(+). Allows the formation of correctly charged Gln-tRNA(Gln) through the transamidation of misacylated Glu-tRNA(Gln) in organisms which lack glutaminyl-tRNA synthetase. The reaction takes place in the presence of glutamine and ATP through an activated gamma-phospho-Glu-tRNA(Gln). The sequence is that of Glutamyl-tRNA(Gln) amidotransferase subunit A from Moorella thermoacetica (strain ATCC 39073 / JCM 9320).